We begin with the raw amino-acid sequence, 296 residues long: Protoheme IX farnesyltransferase (296 aa).

The Cytoplasmic portion of the chain corresponds to 1–9; that stretch reads MMFKQYLQV. Residues 10–28 form a helical membrane-spanning segment; the sequence is TKPGIIFGNLISVIGGFLL. Residues 29–37 are Periplasmic-facing; that stretch reads ASKGSIDYP. The chain crosses the membrane as a helical span at residues 38 to 56; that stretch reads LFIYTLVGVSLVVASGCVF. Residues 57–78 are Cytoplasmic-facing; that stretch reads NNYIDRDIDRKMERTKNRVLVK. A helical transmembrane segment spans residues 79 to 97; the sequence is GLISPGVSLVYATLLGIAG. At 98-107 the chain is on the periplasmic side; sequence FMLLWFGANP. A helical membrane pass occupies residues 108 to 126; the sequence is LACWLGVMGFVVYVGVYSL. Over 127-197 the chain is Cytoplasmic; sequence YMKRHSVYGT…YQAANIPVLP (71 aa). A helical membrane pass occupies residues 198–216; it reads VIKGISVAKNHITLYIIAF. Over 217–228 the chain is Periplasmic; it reads AVATLMLTLGGY. The chain crosses the membrane as a helical span at residues 229–247; it reads AGYKYLVVAAAVSVWWLGM. Over 248 to 268 the chain is Cytoplasmic; it reads ALRGYKVEDDKVWARKLFGFS. The helical transmembrane segment at 269–287 threads the bilayer; that stretch reads IIAITALSIMMSVDFMVPN. At 288-296 the chain is on the periplasmic side; it reads SQNLLTYVW.

It belongs to the UbiA prenyltransferase family. Protoheme IX farnesyltransferase subfamily.

The protein resides in the cell inner membrane. The enzyme catalyses heme b + (2E,6E)-farnesyl diphosphate + H2O = Fe(II)-heme o + diphosphate. The protein operates within porphyrin-containing compound metabolism; heme O biosynthesis; heme O from protoheme: step 1/1. Its function is as follows. Converts heme B (protoheme IX) to heme O by substitution of the vinyl group on carbon 2 of heme B porphyrin ring with a hydroxyethyl farnesyl side group. This chain is Protoheme IX farnesyltransferase, found in Salmonella typhi.